We begin with the raw amino-acid sequence, 123 residues long: Unknown 12C protein (123 aa).

The N-terminal stretch at 1-17 (MMSALFLVLSVSLLVSG) is a signal peptide.

Post-translationally, contains 6 disulfide bonds. Expressed in acontia, a specialised envenomation structure laden with batteries of venom-containing nematocysts found only in the superfamily Metridioidea.

The protein localises to the secreted. The protein resides in the nematocyst. Functionally, cysteine-rich protein with probable toxin activity. The protein is Unknown 12C protein of Calliactis polypus (Hermit crab anemone).